We begin with the raw amino-acid sequence, 475 residues long: Aspartyl/glutamyl-tRNA(Asn/Gln) amidotransferase subunit B (475 aa).

This sequence belongs to the GatB/GatE family. GatB subfamily. Heterotrimer of A, B and C subunits.

The catalysed reaction is L-glutamyl-tRNA(Gln) + L-glutamine + ATP + H2O = L-glutaminyl-tRNA(Gln) + L-glutamate + ADP + phosphate + H(+). It catalyses the reaction L-aspartyl-tRNA(Asn) + L-glutamine + ATP + H2O = L-asparaginyl-tRNA(Asn) + L-glutamate + ADP + phosphate + 2 H(+). Functionally, allows the formation of correctly charged Asn-tRNA(Asn) or Gln-tRNA(Gln) through the transamidation of misacylated Asp-tRNA(Asn) or Glu-tRNA(Gln) in organisms which lack either or both of asparaginyl-tRNA or glutaminyl-tRNA synthetases. The reaction takes place in the presence of glutamine and ATP through an activated phospho-Asp-tRNA(Asn) or phospho-Glu-tRNA(Gln). The sequence is that of Aspartyl/glutamyl-tRNA(Asn/Gln) amidotransferase subunit B from Bacillus cereus (strain ZK / E33L).